Reading from the N-terminus, the 400-residue chain is Acetate kinase (400 aa).

Position 10 (asparagine 10) interacts with Mg(2+). Position 17 (lysine 17) interacts with ATP. Arginine 91 provides a ligand contact to substrate. Aspartate 150 acts as the Proton donor/acceptor in catalysis. Residues 210 to 214 (HLGNG), 285 to 287 (DCR), and 333 to 337 (GIGEN) each bind ATP. Glutamate 387 contributes to the Mg(2+) binding site.

This sequence belongs to the acetokinase family. In terms of assembly, homodimer. It depends on Mg(2+) as a cofactor. Mn(2+) is required as a cofactor.

Its subcellular location is the cytoplasm. The enzyme catalyses acetate + ATP = acetyl phosphate + ADP. It functions in the pathway metabolic intermediate biosynthesis; acetyl-CoA biosynthesis; acetyl-CoA from acetate: step 1/2. Its function is as follows. Catalyzes the formation of acetyl phosphate from acetate and ATP. Can also catalyze the reverse reaction. In Escherichia coli O157:H7, this protein is Acetate kinase.